The sequence spans 106 residues: Small ribosomal subunit protein bS18 (106 aa).

Residues 1–32 (MRWMKIMSEDMKQEQSGEGRGGRGGPARPLAS) are disordered. Over residues 7 to 21 (MSEDMKQEQSGEGRG) the composition is skewed to basic and acidic residues.

Belongs to the bacterial ribosomal protein bS18 family. Part of the 30S ribosomal subunit. Forms a tight heterodimer with protein bS6.

Its function is as follows. Binds as a heterodimer with protein bS6 to the central domain of the 16S rRNA, where it helps stabilize the platform of the 30S subunit. This Magnetococcus marinus (strain ATCC BAA-1437 / JCM 17883 / MC-1) protein is Small ribosomal subunit protein bS18.